Reading from the N-terminus, the 218-residue chain is MWAMSGALRPWALILARSPGARTYAGGGGVSYTQGQSPEPRTREYFYYVDHQGQLFLDDSRMKNFTTCFKDPQFLVMFFSRLRPNRSGRYEAYFPFLSLCGRERNFLRCEDRPVVFTHLLAAGPAPQRLSYCGGGEALAVPFEPARLLPLATNGRLYHPAPERAGGVGLVRSALAFELSACFEYAPGAPELPSHVRWQGRRFALTMDLAPLLLAAPPP.

It belongs to the UPF0598 family.

This is UPF0598 protein C8orf82 homolog from Bos taurus (Bovine).